We begin with the raw amino-acid sequence, 87 residues long: Small ribosomal subunit protein bS20 (87 aa).

The tract at residues 1-26 is disordered; it reads MANIKSAKKRAVQSEKARKHNASRRS.

Belongs to the bacterial ribosomal protein bS20 family.

Its function is as follows. Binds directly to 16S ribosomal RNA. The polypeptide is Small ribosomal subunit protein bS20 (Enterobacter sp. (strain 638)).